The following is a 190-amino-acid chain: Thioredoxin F-type, chloroplastic (190 aa).

The interval 1 to 31 (MALHLSLSHQSWTSPAHPITSSDPTRSSVPG) is disordered. Residues 1–77 (MALHLSLSHQ…SMEQALGTQE (77 aa)) constitute a chloroplast transit peptide. Positions 7–30 (LSHQSWTSPAHPITSSDPTRSSVP) are enriched in polar residues. In terms of domain architecture, Thioredoxin spans 78 to 189 (MEAIVGKVTE…LLEAIQAARS (112 aa)). Active-site nucleophile residues include Cys114 and Cys117. A disulfide bridge links Cys114 with Cys117.

This sequence belongs to the thioredoxin family. Plant F-type subfamily. As to quaternary structure, forms a complex with heterodimeric ferredoxin-thioredoxin reductase (FTR) and ferredoxin.

It is found in the plastid. The protein localises to the chloroplast. Its function is as follows. Participates in various redox reactions through the reversible oxidation of the active center dithiol to a disulfide. The F form is known to activate a number of enzymes of the photosynthetic carbon cycle. The sequence is that of Thioredoxin F-type, chloroplastic from Spinacia oleracea (Spinach).